The following is a 445-amino-acid chain: tRNA-2-methylthio-N(6)-dimethylallyladenosine synthase (445 aa).

The MTTase N-terminal domain occupies 7 to 121 (KHFYIKSFGC…LPELIEKAAS (115 aa)). The [4Fe-4S] cluster site is built by Cys-16, Cys-52, Cys-84, Cys-156, Cys-160, and Cys-163. The region spanning 142-374 (RQVGASAFLT…QALLNQQQFD (233 aa)) is the Radical SAM core domain. Residues 377–438 (QQTIGRKATV…PNSVKGQFLD (62 aa)) enclose the TRAM domain.

It belongs to the methylthiotransferase family. MiaB subfamily. As to quaternary structure, monomer. The cofactor is [4Fe-4S] cluster.

Its subcellular location is the cytoplasm. It catalyses the reaction N(6)-dimethylallyladenosine(37) in tRNA + (sulfur carrier)-SH + AH2 + 2 S-adenosyl-L-methionine = 2-methylsulfanyl-N(6)-dimethylallyladenosine(37) in tRNA + (sulfur carrier)-H + 5'-deoxyadenosine + L-methionine + A + S-adenosyl-L-homocysteine + 2 H(+). Its function is as follows. Catalyzes the methylthiolation of N6-(dimethylallyl)adenosine (i(6)A), leading to the formation of 2-methylthio-N6-(dimethylallyl)adenosine (ms(2)i(6)A) at position 37 in tRNAs that read codons beginning with uridine. In Zymomonas mobilis subsp. mobilis (strain ATCC 31821 / ZM4 / CP4), this protein is tRNA-2-methylthio-N(6)-dimethylallyladenosine synthase.